The sequence spans 422 residues: Glycine amidinotransferase, mitochondrial (422 aa).

Active-site residues include D253 and H302. Catalysis depends on C406, which acts as the Amidino-cysteine intermediate.

This sequence belongs to the amidinotransferase family. As to quaternary structure, homodimer. Strongly expressed in neurons and glia of the brain, the lamina propria, submucosa and serosa of the small intestine, in oocytes and on the fringes of the pancreas. Not expressed in the retina, eye lens, heart or bulbus arteriosus. Expressed in the yolk syncytial layer in gastrula stage embryos, in the yolk syncytial layer and mature somites in early segmentation embryos and in the yolk syncytial layer and the liver of long-pec stage (48 hours post-fertilization) embryos.

It localises to the mitochondrion inner membrane. It carries out the reaction L-arginine + glycine = guanidinoacetate + L-ornithine. The protein operates within amine and polyamine biosynthesis; creatine biosynthesis; creatine from L-arginine and glycine: step 1/2. Its function is as follows. Catalyzes the biosynthesis of guanidinoacetate, the immediate precursor of creatine. Creatine plays a vital role in energy metabolism in muscle tissues. May play a role in embryonic and central nervous system development. This chain is Glycine amidinotransferase, mitochondrial, found in Danio rerio (Zebrafish).